Consider the following 362-residue polypeptide: Meiotic recombination protein SPO11-1 (362 aa).

One can recognise a Topo IIA-type catalytic domain in the interval 8–142; the sequence is SESTNLLQRI…LNVVSVGNGL (135 aa). The active-site O-(5'-phospho-DNA)-tyrosine intermediate is the Tyr103. 2 residues coordinate Mg(2+): Glu189 and Asp241.

The protein belongs to the TOP6A family. In terms of assembly, heterotetramer of 2 SPO11 (SPO11-1 and/or SPO11-2) and 2 MTOPVIB chains. Interacts with MTOPVIB. May form a heterodimer with SPO11-2. Interacts with PRD1. Does not interact with TOP6B. It depends on Mg(2+) as a cofactor. Expressed in shoots, young seedlings, flowers and reproductive tissues. Not found in roots or rosette leaves.

The protein resides in the nucleus. It catalyses the reaction ATP-dependent breakage, passage and rejoining of double-stranded DNA.. Component of a topoisomerase 6 complex specifically required for meiotic recombination. Together with MTOPVIB, mediates DNA cleavage that forms the double-strand breaks (DSB) that initiate meiotic recombination. The complex promotes relaxation of negative and positive supercoiled DNA and DNA decatenation through cleavage and ligation cycles. The polypeptide is Meiotic recombination protein SPO11-1 (Arabidopsis thaliana (Mouse-ear cress)).